The sequence spans 199 residues: Inner membrane protein E199L (199 aa).

A helical transmembrane segment spans residues 150-170 (INVMNHPFLTLILIILILIII).

It belongs to the asfivirus E199L family. In terms of assembly, interacts with host PYCR2; this interaction results in autophagy activation. Contains intramolecular disulfide bonds.

The protein resides in the virion membrane. The protein localises to the host membrane. Functionally, essential for viral fusion with host endosomal membrane and core release. Not required for virus morphogenesis and egress. Induces complete autophagy through the interaction with and down-regulation of host PYCR2. The chain is Inner membrane protein E199L from Ornithodoros (relapsing fever ticks).